A 241-amino-acid polypeptide reads, in one-letter code: Probable transcriptional regulatory protein azo0574 (241 aa).

Residues 1 to 21 (MAGHSKWANIQHRKGRQDAKR) form a disordered region.

Belongs to the TACO1 family.

It localises to the cytoplasm. This is Probable transcriptional regulatory protein azo0574 from Azoarcus sp. (strain BH72).